A 340-amino-acid chain; its full sequence is Ketol-acid reductoisomerase (NADP(+)) (340 aa).

Residues 3 to 182 (VEMLYEADVK…GSARVGLLVT (180 aa)) form the KARI N-terminal Rossmann domain. NADP(+) contacts are provided by residues 26-29 (YGSQ), arginine 49, serine 53, and 83-86 (DEIQ). The active site involves histidine 108. Glycine 134 serves as a coordination point for NADP(+). Residues 183-328 (TFKEETEEDL…AELRKAMPFV (146 aa)) enclose the KARI C-terminal knotted domain. The Mg(2+) site is built by aspartate 191, glutamate 195, glutamate 227, and glutamate 231. Residue serine 252 coordinates substrate.

It belongs to the ketol-acid reductoisomerase family. It depends on Mg(2+) as a cofactor.

It catalyses the reaction (2R)-2,3-dihydroxy-3-methylbutanoate + NADP(+) = (2S)-2-acetolactate + NADPH + H(+). The enzyme catalyses (2R,3R)-2,3-dihydroxy-3-methylpentanoate + NADP(+) = (S)-2-ethyl-2-hydroxy-3-oxobutanoate + NADPH + H(+). It participates in amino-acid biosynthesis; L-isoleucine biosynthesis; L-isoleucine from 2-oxobutanoate: step 2/4. Its pathway is amino-acid biosynthesis; L-valine biosynthesis; L-valine from pyruvate: step 2/4. In terms of biological role, involved in the biosynthesis of branched-chain amino acids (BCAA). Catalyzes an alkyl-migration followed by a ketol-acid reduction of (S)-2-acetolactate (S2AL) to yield (R)-2,3-dihydroxy-isovalerate. In the isomerase reaction, S2AL is rearranged via a Mg-dependent methyl migration to produce 3-hydroxy-3-methyl-2-ketobutyrate (HMKB). In the reductase reaction, this 2-ketoacid undergoes a metal-dependent reduction by NADPH to yield (R)-2,3-dihydroxy-isovalerate. This is Ketol-acid reductoisomerase (NADP(+)) from Streptococcus mutans serotype c (strain ATCC 700610 / UA159).